Here is a 662-residue protein sequence, read N- to C-terminus: Threonine--tRNA ligase (662 aa).

Residues 1-64 form the TGS domain; it reads MSQSVSLTFP…ADGKIEIITR (64 aa). The segment at 245-547 is catalytic; sequence DHRRLGREMD…LIENFAGHMP (303 aa). Zn(2+) is bound by residues C341, H392, and H524.

This sequence belongs to the class-II aminoacyl-tRNA synthetase family. As to quaternary structure, homodimer. The cofactor is Zn(2+).

It localises to the cytoplasm. The enzyme catalyses tRNA(Thr) + L-threonine + ATP = L-threonyl-tRNA(Thr) + AMP + diphosphate + H(+). Functionally, catalyzes the attachment of threonine to tRNA(Thr) in a two-step reaction: L-threonine is first activated by ATP to form Thr-AMP and then transferred to the acceptor end of tRNA(Thr). Also edits incorrectly charged L-seryl-tRNA(Thr). This Rhizobium rhizogenes (strain K84 / ATCC BAA-868) (Agrobacterium radiobacter) protein is Threonine--tRNA ligase.